A 187-amino-acid polypeptide reads, in one-letter code: Small ribosomal subunit protein uS10m (187 aa).

Belongs to the universal ribosomal protein uS10 family. In terms of assembly, component of the mitochondrial ribosome small subunit (28S) which comprises a 12S rRNA and about 30 distinct proteins.

It localises to the mitochondrion. This Danio rerio (Zebrafish) protein is Small ribosomal subunit protein uS10m (mrps10).